The following is a 665-amino-acid chain: MATGRYIVEVEKGKQGVDGGSPSVGPVYRSIYAKDGFPEPPDDLVSAWDIFRLSVEKSPNNPMLGRREIVDGKAGKYVWQTYKEVHNVVIKLGNSIRTIGVGKGDKCGIYGANSPEWIISMEACNAHGLYCVPLYDTLGAGAIEFIICHAEVSLAFAEENKISELLKTAPKSTKYLKYIVSFGEVTNNQRVEAERHRLTIYSWDQFLKLGEGKHYELPEKRRSDVCTIMYTSGTTGDPKGVLLTNESIIHLLEGVKKLLKTIDEELTSKDVYLSYLPLAHIFDRVIEELCIYEAASIGFWRGDVKILIEDIAALKPTVFCAVPRVLERIYTGLQQKLSDGGFVKKKLFNFAFKYKHKNMEKGQPHEQASPIADKIVFKKVKEGLGGNVRLILSGAAPLAAHIESFLRVVACAHVLQGYGLTESCGGTFVSIPNELSMLGTVGPPVPNVDIRLESVPEMGYDALASNPRGEICIRGKTLFSGYYKREDLTQEVFIDGWLHTGDVGEWQPDGAMKIIDRKKNIFKLSQGEYVAVENLENIYSHVAAIESIWVYGNSYESYLVAVVCPSKIQIEHWAKEHKVSGDFESICRNQKTKEFVLGEFNRVAKDKKLKGFELIKGVHLDTVPFDMERDLITPSYKMKRPQLLKYYQKEIDEMYKKNREVQLRV.

ATP is bound at residue 228-239 (IMYTSGTTGDPK). Residues 495 to 519 (DGWLHTGDVGEWQPDGAMKIIDRKK) are fatty acid-binding.

The protein belongs to the ATP-dependent AMP-binding enzyme family. Mg(2+) is required as a cofactor.

The catalysed reaction is a long-chain fatty acid + ATP + CoA = a long-chain fatty acyl-CoA + AMP + diphosphate. The protein operates within lipid metabolism; fatty acid metabolism. Functionally, activation of long-chain fatty acids for both synthesis of cellular lipids, and degradation via beta-oxidation. Preferentially uses palmitate, palmitoleate, oleate and linoleate. The protein is Long chain acyl-CoA synthetase 3 (LACS3) of Arabidopsis thaliana (Mouse-ear cress).